The sequence spans 634 residues: DNA-directed RNA polymerase subunit gamma (634 aa).

Residues C74, C76, C89, and C92 each contribute to the Zn(2+) site. The Mg(2+) site is built by D471, D473, and D475.

Belongs to the RNA polymerase beta' chain family. RpoC1 subfamily. In cyanobacteria the RNAP catalytic core is composed of 2 alpha, 1 beta, 1 beta', 1 gamma and 1 omega subunit. When a sigma factor is associated with the core the holoenzyme is formed, which can initiate transcription. Mg(2+) is required as a cofactor. The cofactor is Zn(2+).

The catalysed reaction is RNA(n) + a ribonucleoside 5'-triphosphate = RNA(n+1) + diphosphate. DNA-dependent RNA polymerase catalyzes the transcription of DNA into RNA using the four ribonucleoside triphosphates as substrates. The protein is DNA-directed RNA polymerase subunit gamma of Synechococcus sp. (strain WH7803).